A 224-amino-acid polypeptide reads, in one-letter code: 7-cyano-7-deazaguanine synthase (224 aa).

14–24 (FSGGQDSTTCL) lines the ATP pocket. 4 residues coordinate Zn(2+): Cys190, Cys198, Cys201, and Cys204.

Belongs to the QueC family. Zn(2+) serves as cofactor.

The enzyme catalyses 7-carboxy-7-deazaguanine + NH4(+) + ATP = 7-cyano-7-deazaguanine + ADP + phosphate + H2O + H(+). It participates in purine metabolism; 7-cyano-7-deazaguanine biosynthesis. Its function is as follows. Catalyzes the ATP-dependent conversion of 7-carboxy-7-deazaguanine (CDG) to 7-cyano-7-deazaguanine (preQ(0)). The sequence is that of 7-cyano-7-deazaguanine synthase from Haemophilus ducreyi (strain 35000HP / ATCC 700724).